The following is a 92-amino-acid chain: Elongation factor 1-beta (92 aa).

It belongs to the EF-1-beta/EF-1-delta family.

Its function is as follows. Promotes the exchange of GDP for GTP in EF-1-alpha/GDP, thus allowing the regeneration of EF-1-alpha/GTP that could then be used to form the ternary complex EF-1-alpha/GTP/AAtRNA. The polypeptide is Elongation factor 1-beta (Pyrobaculum neutrophilum (strain DSM 2338 / JCM 9278 / NBRC 100436 / V24Sta) (Thermoproteus neutrophilus)).